Reading from the N-terminus, the 417-residue chain is Zinc finger CCCH domain-containing protein ZFN-like (417 aa).

2 C3H1-type zinc fingers span residues 31 to 58 (PGEP…HPPN) and 75 to 103 (RLGQ…HPKD). The C3H1-type 3; degenerate zinc-finger motif lies at 121–149 (RPNESERAYYLRTGQCKFGNTCKFHHPQP). C3H1-type zinc fingers lie at residues 278–306 (RPDQ…HPRE) and 324–352 (RPGE…HPMG). A disordered region spans residues 383–417 (SSEGLVESGTAKPRRLSLSETRPIPPGDDNIDDEG).

It is found in the nucleus. In Pisum sativum (Garden pea), this protein is Zinc finger CCCH domain-containing protein ZFN-like.